The primary structure comprises 405 residues: L-carnitine CoA-transferase (405 aa).

Positions 97 and 104 each coordinate CoA. Asp169 acts as the Nucleophile in catalysis.

It belongs to the CoA-transferase III family. CaiB subfamily. Homodimer.

It is found in the cytoplasm. It catalyses the reaction crotonobetainyl-CoA + (R)-carnitine = crotonobetaine + (R)-carnitinyl-CoA. It carries out the reaction 4-(trimethylamino)butanoyl-CoA + (R)-carnitine = (R)-carnitinyl-CoA + 4-(trimethylamino)butanoate. The protein operates within amine and polyamine metabolism; carnitine metabolism. Catalyzes the reversible transfer of the CoA moiety from gamma-butyrobetainyl-CoA to L-carnitine to generate L-carnitinyl-CoA and gamma-butyrobetaine. Is also able to catalyze the reversible transfer of the CoA moiety from gamma-butyrobetainyl-CoA or L-carnitinyl-CoA to crotonobetaine to generate crotonobetainyl-CoA. The polypeptide is L-carnitine CoA-transferase (Escherichia coli O17:K52:H18 (strain UMN026 / ExPEC)).